The following is a 399-amino-acid chain: Enoyl-[acyl-carrier-protein] reductase [NADH] (399 aa).

Residues 48-53 (GASTGY), 74-75 (FE), 111-112 (DA), and 139-140 (LA) contribute to the NAD(+) site. Tyr-225 is a substrate binding site. The active-site Proton donor is the Tyr-235. NAD(+) is bound by residues Lys-244 and 274–276 (VVT).

Belongs to the TER reductase family. As to quaternary structure, monomer.

The catalysed reaction is a 2,3-saturated acyl-[ACP] + NAD(+) = a (2E)-enoyl-[ACP] + NADH + H(+). Its pathway is lipid metabolism; fatty acid biosynthesis. Its function is as follows. Involved in the final reduction of the elongation cycle of fatty acid synthesis (FAS II). Catalyzes the reduction of a carbon-carbon double bond in an enoyl moiety that is covalently linked to an acyl carrier protein (ACP). This is Enoyl-[acyl-carrier-protein] reductase [NADH] from Erwinia tasmaniensis (strain DSM 17950 / CFBP 7177 / CIP 109463 / NCPPB 4357 / Et1/99).